We begin with the raw amino-acid sequence, 380 residues long: Cytochrome b (380 aa).

The next 4 helical transmembrane spans lie at 34-54, 78-99, 114-134, and 179-199; these read FGSLLGICLMTQILTGLLLAM, WLIRNLHANGASFFFICIYLHI, WNTGVILLLTLMATAFVGYVL, and FFALHFLLPFMIAGLTLVHLT. Heme b-binding residues include H84 and H98. Heme b is bound by residues H183 and H197. H202 provides a ligand contact to a ubiquinone. The next 4 membrane-spanning stretches (helical) occupy residues 227-247, 289-309, 321-341, and 348-368; these read LKDILGFTLMLLPLTTLALFS, LGGVLALAASVLILFLAPFLH, LSQLLFWILVANLFILTWVGS, and FIIIGQLASFTYFTILLILFP.

Belongs to the cytochrome b family. In terms of assembly, the cytochrome bc1 complex contains 11 subunits: 3 respiratory subunits (MT-CYB, CYC1 and UQCRFS1), 2 core proteins (UQCRC1 and UQCRC2) and 6 low-molecular weight proteins (UQCRH/QCR6, UQCRB/QCR7, UQCRQ/QCR8, UQCR10/QCR9, UQCR11/QCR10 and a cleavage product of UQCRFS1). This cytochrome bc1 complex then forms a dimer. Heme b is required as a cofactor.

It localises to the mitochondrion inner membrane. In terms of biological role, component of the ubiquinol-cytochrome c reductase complex (complex III or cytochrome b-c1 complex) that is part of the mitochondrial respiratory chain. The b-c1 complex mediates electron transfer from ubiquinol to cytochrome c. Contributes to the generation of a proton gradient across the mitochondrial membrane that is then used for ATP synthesis. This is Cytochrome b (MT-CYB) from Procellaria parkinsoni (Black petrel).